Here is a 455-residue protein sequence, read N- to C-terminus: Bifunctional protein GlmU (455 aa).

The interval 1–228 (MTQPLHVIIL…AQEAEGANDP (228 aa)) is pyrophosphorylase. Residues 10–13 (LAAG), lysine 24, glutamine 76, 81–82 (GT), 103–105 (YGD), glycine 138, glutamate 153, asparagine 168, and asparagine 226 contribute to the UDP-N-acetyl-alpha-D-glucosamine site. Aspartate 105 contacts Mg(2+). Asparagine 226 lines the Mg(2+) pocket. The tract at residues 229-249 (WQLSQLERAWQRRAVRALCAQ) is linker. Residues 250–455 (GARVRDPARL…DGWKRPLKKS (206 aa)) are N-acetyltransferase. UDP-N-acetyl-alpha-D-glucosamine is bound by residues arginine 332 and lysine 350. The active-site Proton acceptor is histidine 362. 2 residues coordinate UDP-N-acetyl-alpha-D-glucosamine: tyrosine 365 and asparagine 376. Acetyl-CoA contacts are provided by residues alanine 379, 385–386 (NY), serine 404, alanine 422, and arginine 439.

It in the N-terminal section; belongs to the N-acetylglucosamine-1-phosphate uridyltransferase family. The protein in the C-terminal section; belongs to the transferase hexapeptide repeat family. Homotrimer. Mg(2+) serves as cofactor.

Its subcellular location is the cytoplasm. The enzyme catalyses alpha-D-glucosamine 1-phosphate + acetyl-CoA = N-acetyl-alpha-D-glucosamine 1-phosphate + CoA + H(+). It carries out the reaction N-acetyl-alpha-D-glucosamine 1-phosphate + UTP + H(+) = UDP-N-acetyl-alpha-D-glucosamine + diphosphate. It participates in nucleotide-sugar biosynthesis; UDP-N-acetyl-alpha-D-glucosamine biosynthesis; N-acetyl-alpha-D-glucosamine 1-phosphate from alpha-D-glucosamine 6-phosphate (route II): step 2/2. Its pathway is nucleotide-sugar biosynthesis; UDP-N-acetyl-alpha-D-glucosamine biosynthesis; UDP-N-acetyl-alpha-D-glucosamine from N-acetyl-alpha-D-glucosamine 1-phosphate: step 1/1. The protein operates within bacterial outer membrane biogenesis; LPS lipid A biosynthesis. Its function is as follows. Catalyzes the last two sequential reactions in the de novo biosynthetic pathway for UDP-N-acetylglucosamine (UDP-GlcNAc). The C-terminal domain catalyzes the transfer of acetyl group from acetyl coenzyme A to glucosamine-1-phosphate (GlcN-1-P) to produce N-acetylglucosamine-1-phosphate (GlcNAc-1-P), which is converted into UDP-GlcNAc by the transfer of uridine 5-monophosphate (from uridine 5-triphosphate), a reaction catalyzed by the N-terminal domain. The polypeptide is Bifunctional protein GlmU (Stenotrophomonas maltophilia (strain K279a)).